A 530-amino-acid chain; its full sequence is FSD1-like protein (530 aa).

Position 1 is an N-acetylmethionine (Met1). A coiled-coil region spans residues 102–141; the sequence is KQEQARKSQELQSQISQCNNALENSEELLEFATRSLDIKE. The COS domain maps to 137-194; sequence LDIKEPEEFSKAARQIKDRVTMASAFRLSLKPKVSDNMTHLMVDFSQERQMLQTLKFL. Residues 196 to 300 enclose the Fibronectin type-III domain; that stretch reads VPKAPEIDPV…DPVTLETKAL (105 aa). In terms of domain architecture, B30.2/SPRY spans 300-506; it reads LNFNLDNSSS…LSTGMQVPSA (207 aa). A disordered region spans residues 322–366; it reads WDPTGGKGQESKIKGKENKGRSGTPSPKRTSVGSRPPAVRGSRDR. The span at 330-341 shows a compositional bias: basic and acidic residues; it reads QESKIKGKENKG. Over residues 342 to 354 the composition is skewed to polar residues; the sequence is RSGTPSPKRTSVG. Phosphoserine occurs at positions 520 and 523.

The chain is FSD1-like protein (FSD1L) from Homo sapiens (Human).